A 248-amino-acid polypeptide reads, in one-letter code: Membrane-spanning 4-domains subfamily A member 6A (248 aa).

Over 1-46 the chain is Cytoplasmic; sequence MTSQPVPNETIIVLPSNVINFSQAEKPEPTNQGQDSLKKHLHAEIK. Residues 47-67 form a helical membrane-spanning segment; it reads VIGTIQILCGMMVLSLGIILA. Topologically, residues 68–84 are extracellular; it reads SASFSPNFTQVTSTLLN. Residues 85–105 traverse the membrane as a helical segment; that stretch reads SAYPFIGPFFFIISGSLSIAT. Residues 106–116 are Cytoplasmic-facing; sequence EKRLTKLLVHS. Residues 117–137 form a helical membrane-spanning segment; it reads SLVGSILSALSALVGFIILSV. The Extracellular segment spans residues 138–185; that stretch reads KQATLNPASLQCELDKNNIPTRSYVSYFYHDSLYTTDCYTAKASLAGT. Residues 186–206 form a helical membrane-spanning segment; it reads LSLMLICTLLEFCLAVLTAVL. The Cytoplasmic segment spans residues 207–248; it reads RWKQAYSDFPGSVLFLPHSYIGNSGMSSKMTHDCGYEELLTS.

It belongs to the MS4A family. Variable expression in some B-cell, myelomonocytic, and erythroleukemia cell lines.

The protein resides in the membrane. May be involved in signal transduction as a component of a multimeric receptor complex. The protein is Membrane-spanning 4-domains subfamily A member 6A (MS4A6A) of Homo sapiens (Human).